The following is a 128-amino-acid chain: MQKRVRNRLITIIICFCSACLGISIILYNLEKNIVFFLPPSKINEIEQGKELRVGGLVKTDSINKIADDKISFVITDNIKDFEILYQGTLPTLFRKGQGIIAIGQLSNGKFIARQLLAKHDENYRPPQ.

Residues 1–8 lie on the Cytoplasmic side of the membrane; sequence MQKRVRNR. The chain crosses the membrane as a helical; Signal-anchor for type II membrane protein span at residues 9 to 29; that stretch reads LITIIICFCSACLGISIILYN. Residues 30–128 are Extracellular-facing; that stretch reads LEKNIVFFLP…KHDENYRPPQ (99 aa). 2 residues coordinate heme: His120 and Tyr124.

The protein belongs to the CcmE/CycJ family.

It localises to the cell membrane. In terms of biological role, heme chaperone required for the biogenesis of c-type cytochromes. Transiently binds heme delivered by CcmC and transfers the heme to apo-cytochromes in a process facilitated by CcmF and CcmH. The protein is Cytochrome c-type biogenesis protein CcmE of Rickettsia africae (strain ESF-5).